We begin with the raw amino-acid sequence, 185 residues long: Cbp/p300-interacting transactivator 4 (185 aa).

Disordered regions lie at residues 15–64 (PRPP…VAYG) and 95–130 (YPGRATMPPGAPGGPSGPQPAPGAPAPPLQPPAHAL). The segment covering 103 to 125 (PGAPGGPSGPQPAPGAPAPPLQP) has biased composition (pro residues).

This sequence belongs to the CITED family. Interacts via its C-terminal region with the CH1 domain of CREBBP and EP300. Interacts with all TFAP2/AP-2 isoforms.

It is found in the nucleus. It localises to the cytoplasm. In terms of biological role, acts as a transcriptional coactivator for TFAP2/AP-2. Enhances estrogen-dependent transactivation mediated by estrogen receptors. May function as an inhibitor of transactivation by HIF1A by disrupting HIF1A interaction with CREBBP. May be involved in regulation of gene expression during development and differentiation of blood cells, endothelial cells and mammary epithelial cells. This Bos taurus (Bovine) protein is Cbp/p300-interacting transactivator 4 (CITED4).